We begin with the raw amino-acid sequence, 378 residues long: Chaperone protein DnaJ (378 aa).

The 66-residue stretch at 5 to 70 (DYYEVLGVAK…QKRAAYDQYG (66 aa)) folds into the J domain. A CR-type zinc finger spans residues 138–216 (GYDTQIRVPS…CHGSGKVKET (79 aa)). Residues Cys-151, Cys-154, Cys-168, Cys-171, Cys-190, Cys-193, Cys-204, and Cys-207 each contribute to the Zn(2+) site. CXXCXGXG motif repeat units lie at residues 151–158 (CEVCHGSG), 168–175 (CPTCHGQG), 190–197 (CPKCHGTG), and 204–211 (CVHCHGSG).

This sequence belongs to the DnaJ family. Homodimer. It depends on Zn(2+) as a cofactor.

The protein resides in the cytoplasm. Functionally, participates actively in the response to hyperosmotic and heat shock by preventing the aggregation of stress-denatured proteins and by disaggregating proteins, also in an autonomous, DnaK-independent fashion. Unfolded proteins bind initially to DnaJ; upon interaction with the DnaJ-bound protein, DnaK hydrolyzes its bound ATP, resulting in the formation of a stable complex. GrpE releases ADP from DnaK; ATP binding to DnaK triggers the release of the substrate protein, thus completing the reaction cycle. Several rounds of ATP-dependent interactions between DnaJ, DnaK and GrpE are required for fully efficient folding. Also involved, together with DnaK and GrpE, in the DNA replication of plasmids through activation of initiation proteins. This is Chaperone protein DnaJ from Burkholderia lata (strain ATCC 17760 / DSM 23089 / LMG 22485 / NCIMB 9086 / R18194 / 383).